The following is a 374-amino-acid chain: tRNA-specific 2-thiouridylase MnmA (374 aa).

Residues 12–19 (GMSGGVDS) and Met-38 contribute to the ATP site. Residues 98 to 100 (NPD) form an interaction with target base in tRNA region. The Nucleophile role is filled by Cys-103. Cys-103 and Cys-200 form a disulfide bridge. Gly-127 contributes to the ATP binding site. An interaction with tRNA region spans residues 150-152 (KDQ). Cys-200 acts as the Cysteine persulfide intermediate in catalysis. The interval 311–312 (RY) is interaction with tRNA.

It belongs to the MnmA/TRMU family.

Its subcellular location is the cytoplasm. It carries out the reaction S-sulfanyl-L-cysteinyl-[protein] + uridine(34) in tRNA + AH2 + ATP = 2-thiouridine(34) in tRNA + L-cysteinyl-[protein] + A + AMP + diphosphate + H(+). Its function is as follows. Catalyzes the 2-thiolation of uridine at the wobble position (U34) of tRNA, leading to the formation of s(2)U34. In Enterococcus faecalis (strain ATCC 700802 / V583), this protein is tRNA-specific 2-thiouridylase MnmA.